The following is an 84-amino-acid chain: Tenecin-1 (84 aa).

The signal sequence occupies residues 1-19 (MKLTIFALVACFFILQIAA). A propeptide spanning residues 20–41 (FPLEEAATAEEIEQGEHIRVKR) is cleaved from the precursor. Disulfide bonds link Cys44–Cys75, Cys61–Cys81, and Cys65–Cys83.

The protein belongs to the invertebrate defensin family. Type 1 subfamily.

The protein resides in the secreted. Its function is as follows. Bactericidal protein produced in response to injury. It is cytotoxic to Gram-positive bacteria. The sequence is that of Tenecin-1 from Tenebrio molitor (Yellow mealworm beetle).